A 161-amino-acid chain; its full sequence is Zinc finger A20 and AN1 domain-containing stress-associated protein 4 (161 aa).

The A20-type zinc finger occupies 10-44; the sequence is PEGHRLCVNNCGFFGSSATMNLCSNCYGDLCLKQQ. Zn(2+) contacts are provided by Cys16, Cys20, Cys32, and Cys35. Positions 76–85 are enriched in basic and acidic residues; that stretch reads TTKKTEEKKP. A disordered region spans residues 76–99; it reads TTKKTEEKKPIQIPTEQPSPPQRP. The segment at 96–142 adopts an AN1-type zinc-finger fold; sequence PQRPNRCTVCRKRVGLTGFMCRCGTTFCGSHRYPEVHGCTFDFKSAG. Zn(2+) contacts are provided by Cys102, Cys105, Cys116, Cys118, Cys123, His126, His132, and Cys134.

May be involved in environmental stress response. The chain is Zinc finger A20 and AN1 domain-containing stress-associated protein 4 (SAP4) from Arabidopsis thaliana (Mouse-ear cress).